The primary structure comprises 293 residues: 4-hydroxy-tetrahydrodipicolinate synthase (293 aa).

Residue T46 participates in pyruvate binding. Y133 functions as the Proton donor/acceptor in the catalytic mechanism. Catalysis depends on K161, which acts as the Schiff-base intermediate with substrate. V202 is a pyruvate binding site.

This sequence belongs to the DapA family. Homotetramer; dimer of dimers.

The protein localises to the cytoplasm. It carries out the reaction L-aspartate 4-semialdehyde + pyruvate = (2S,4S)-4-hydroxy-2,3,4,5-tetrahydrodipicolinate + H2O + H(+). It functions in the pathway amino-acid biosynthesis; L-lysine biosynthesis via DAP pathway; (S)-tetrahydrodipicolinate from L-aspartate: step 3/4. Functionally, catalyzes the condensation of (S)-aspartate-beta-semialdehyde [(S)-ASA] and pyruvate to 4-hydroxy-tetrahydrodipicolinate (HTPA). This is 4-hydroxy-tetrahydrodipicolinate synthase from Wolbachia pipientis wMel.